A 506-amino-acid polypeptide reads, in one-letter code: Bifunctional purine biosynthesis protein PurH (506 aa).

In terms of domain architecture, MGS-like spans 1–142 (MRAIISVYRK…KNFFRVVILV (142 aa)).

Belongs to the PurH family.

The catalysed reaction is (6R)-10-formyltetrahydrofolate + 5-amino-1-(5-phospho-beta-D-ribosyl)imidazole-4-carboxamide = 5-formamido-1-(5-phospho-D-ribosyl)imidazole-4-carboxamide + (6S)-5,6,7,8-tetrahydrofolate. It carries out the reaction IMP + H2O = 5-formamido-1-(5-phospho-D-ribosyl)imidazole-4-carboxamide. The protein operates within purine metabolism; IMP biosynthesis via de novo pathway; 5-formamido-1-(5-phospho-D-ribosyl)imidazole-4-carboxamide from 5-amino-1-(5-phospho-D-ribosyl)imidazole-4-carboxamide (10-formyl THF route): step 1/1. It participates in purine metabolism; IMP biosynthesis via de novo pathway; IMP from 5-formamido-1-(5-phospho-D-ribosyl)imidazole-4-carboxamide: step 1/1. In Aquifex aeolicus (strain VF5), this protein is Bifunctional purine biosynthesis protein PurH.